The following is a 71-amino-acid chain: uncharacterized protein (71 aa).

The segment covering 1–16 has biased composition (basic residues); the sequence is MAKSQAKKKRGHRLRN. 2 disordered regions span residues 1–39 and 51–71; these read MAKS…RMTK and KNPY…QKAA. Polar residues predominate over residues 25–35; that stretch reads RGSTPSFSTHG. Residues 51–64 show a composition bias toward basic and acidic residues; sequence KNPYDHTAVDDKDF.

This is an uncharacterized protein from Bacillus subtilis (strain 168).